We begin with the raw amino-acid sequence, 1241 residues long: Dinoflagellate luciferase (1241 aa).

3 luciferase regions span residues 114–465 (KTGL…IKRD), 491–842 (DQGF…TKRD), and 868–1218 (EKGF…KKRD).

It belongs to the calycin superfamily. Luciferase family.

The protein localises to the cytoplasmic vesicle. It carries out the reaction dinoflagellate luciferin + O2 = oxidized dinoflagellate luciferin + hnu + H2O + H(+). Its activity is regulated as follows. Regulated by pH: upon acidification, at a pH of 6.3, dinoflagellate luciferin is released from luciferin-binding protein LBP, allowing the interaction between Dinoflagellate luciferase and its substrate luciferin. Its function is as follows. Emits blue light flashes with a wavelength of 475 nm during the night phase. This is Dinoflagellate luciferase from Lingulodinium polyedra (Dinoflagellate).